The chain runs to 199 residues: Dephospho-CoA kinase (199 aa).

The 197-residue stretch at 3 to 199 folds into the DPCK domain; the sequence is VIGLTGSIGM…AAAKMPRRRS (197 aa). An ATP-binding site is contributed by 11–16; it reads GMGKST.

This sequence belongs to the CoaE family.

It localises to the cytoplasm. It carries out the reaction 3'-dephospho-CoA + ATP = ADP + CoA + H(+). It functions in the pathway cofactor biosynthesis; coenzyme A biosynthesis; CoA from (R)-pantothenate: step 5/5. Functionally, catalyzes the phosphorylation of the 3'-hydroxyl group of dephosphocoenzyme A to form coenzyme A. This chain is Dephospho-CoA kinase, found in Nitrobacter winogradskyi (strain ATCC 25391 / DSM 10237 / CIP 104748 / NCIMB 11846 / Nb-255).